A 160-amino-acid chain; its full sequence is UPF0479 membrane protein YER190C-B (160 aa).

2 helical membrane-spanning segments follow: residues 39-59 and 136-156; these read IVFCLPFFPALFFVPVQKVLQ and VPMIWLDVFQVFFVFLVISQH.

This sequence belongs to the UPF0479 family.

The protein localises to the membrane. The polypeptide is UPF0479 membrane protein YER190C-B (Saccharomyces cerevisiae (strain ATCC 204508 / S288c) (Baker's yeast)).